The primary structure comprises 229 residues: Rab-like protein 2A (229 aa).

GTP-binding positions include 28–35, 76–80, and 133–136; these read GDSAVGKS, DTAGQ, and NKID. The disordered stretch occupies residues 200-229; it reads NLEQEEEDVPDQEQSGSIETPSEEVASPHS.

It belongs to the small GTPase superfamily. Rab family. As to quaternary structure, interacts with IFT27, IFT81, IFT172, ATP6V1E1, HK1, LDHC, MAPRE1 and HSPA2.

In terms of biological role, plays an essential role in male fertility, sperm intra-flagellar transport, and tail assembly. Binds, in a GTP-regulated manner, to a specific set of effector proteins including key proteins involved in cilia development and function and delivers them into the growing sperm tail. The chain is Rab-like protein 2A (RABL2A) from Pongo abelii (Sumatran orangutan).